The chain runs to 500 residues: Pyoverdin chromophore biosynthetic protein PvcC (500 aa).

The cofactor is FAD.

The protein operates within siderophore biosynthesis; pyoverdin biosynthesis. This Pseudomonas aeruginosa (strain ATCC 15692 / DSM 22644 / CIP 104116 / JCM 14847 / LMG 12228 / 1C / PRS 101 / PAO1) protein is Pyoverdin chromophore biosynthetic protein PvcC (pvcC).